A 227-amino-acid polypeptide reads, in one-letter code: Translation initiation factor 6 (227 aa).

Belongs to the eIF-6 family.

In terms of biological role, binds to the 50S ribosomal subunit and prevents its association with the 30S ribosomal subunit to form the 70S initiation complex. This chain is Translation initiation factor 6, found in Methanococcus vannielii (strain ATCC 35089 / DSM 1224 / JCM 13029 / OCM 148 / SB).